We begin with the raw amino-acid sequence, 259 residues long: UPF0246 protein NGO_0461 (259 aa).

It belongs to the UPF0246 family.

This Neisseria gonorrhoeae (strain ATCC 700825 / FA 1090) protein is UPF0246 protein NGO_0461.